The following is a 282-amino-acid chain: Shikimate dehydrogenase (NADP(+)) (282 aa).

Shikimate-binding positions include 18-20 (SRS) and T65. The Proton acceptor role is filled by K69. E81 provides a ligand contact to NADP(+). Positions 90 and 105 each coordinate shikimate. NADP(+) contacts are provided by residues 130 to 134 (GAGGA), 154 to 159 (NRTPAR), and M222. Position 224 (Y224) interacts with shikimate. Residue G245 coordinates NADP(+).

It belongs to the shikimate dehydrogenase family. Homodimer.

It carries out the reaction shikimate + NADP(+) = 3-dehydroshikimate + NADPH + H(+). It functions in the pathway metabolic intermediate biosynthesis; chorismate biosynthesis; chorismate from D-erythrose 4-phosphate and phosphoenolpyruvate: step 4/7. Its function is as follows. Involved in the biosynthesis of the chorismate, which leads to the biosynthesis of aromatic amino acids. Catalyzes the reversible NADPH linked reduction of 3-dehydroshikimate (DHSA) to yield shikimate (SA). The sequence is that of Shikimate dehydrogenase (NADP(+)) from Acidovorax sp. (strain JS42).